The sequence spans 957 residues: Glycine dehydrogenase (decarboxylating) (957 aa).

K708 is subject to N6-(pyridoxal phosphate)lysine.

The protein belongs to the GcvP family. The glycine cleavage system is composed of four proteins: P, T, L and H. Requires pyridoxal 5'-phosphate as cofactor.

It carries out the reaction N(6)-[(R)-lipoyl]-L-lysyl-[glycine-cleavage complex H protein] + glycine + H(+) = N(6)-[(R)-S(8)-aminomethyldihydrolipoyl]-L-lysyl-[glycine-cleavage complex H protein] + CO2. In terms of biological role, the glycine cleavage system catalyzes the degradation of glycine. The P protein binds the alpha-amino group of glycine through its pyridoxal phosphate cofactor; CO(2) is released and the remaining methylamine moiety is then transferred to the lipoamide cofactor of the H protein. The sequence is that of Glycine dehydrogenase (decarboxylating) from Salmonella dublin (strain CT_02021853).